Here is a 446-residue protein sequence, read N- to C-terminus: Na(+)-translocating NADH-quinone reductase subunit A (446 aa).

The protein belongs to the NqrA family. Composed of six subunits; NqrA, NqrB, NqrC, NqrD, NqrE and NqrF.

It carries out the reaction a ubiquinone + n Na(+)(in) + NADH + H(+) = a ubiquinol + n Na(+)(out) + NAD(+). In terms of biological role, NQR complex catalyzes the reduction of ubiquinone-1 to ubiquinol by two successive reactions, coupled with the transport of Na(+) ions from the cytoplasm to the periplasm. NqrA to NqrE are probably involved in the second step, the conversion of ubisemiquinone to ubiquinol. The chain is Na(+)-translocating NADH-quinone reductase subunit A from Psychromonas ingrahamii (strain DSM 17664 / CCUG 51855 / 37).